The primary structure comprises 385 residues: Methionine aminopeptidase 1 (385 aa).

A C6H2-type zinc finger spans residues 6 to 59 (SRVCETEGCSSEAKLQCPTCIKLGIQGSYFCSQECFKGSWASHKLLHKKAKDDK). Zn(2+)-binding residues include cysteine 9, cysteine 14, cysteine 22, cysteine 25, cysteine 36, cysteine 40, histidine 48, and histidine 52. Histidine 203 provides a ligand contact to a protein. The Zn(2+) site is built by aspartate 220, aspartate 231, and histidine 294. Histidine 301 contributes to the a protein binding site. Glutamate 327 and glutamate 358 together coordinate Zn(2+).

It belongs to the peptidase M24A family. Methionine aminopeptidase type 1 subfamily. As to quaternary structure, associates with the 60S ribosomal subunit of the 80S translational complex. Zn(2+) serves as cofactor. The cofactor is Co(2+). Mn(2+) is required as a cofactor. Requires Fe(2+) as cofactor.

It is found in the cytoplasm. It carries out the reaction Release of N-terminal amino acids, preferentially methionine, from peptides and arylamides.. Functionally, cotranslationally removes the N-terminal methionine from nascent proteins. The N-terminal methionine is often cleaved when the second residue in the primary sequence is small and uncharged (Met-Ala-, Cys, Gly, Pro, Ser, Thr, or Val). In Xenopus tropicalis (Western clawed frog), this protein is Methionine aminopeptidase 1 (metap1).